The following is a 355-amino-acid chain: Chemerin-like receptor 2 (355 aa).

Topologically, residues 1 to 41 are extracellular; sequence MEDLEETLFEEFENYSYDLDYYSLESDLEEKVQLGVVHWVS. A glycan (N-linked (GlcNAc...) asparagine) is linked at Asn-14. Residues 42–62 traverse the membrane as a helical segment; sequence LVLYCLAFVLGIPGNAIVIWF. Topologically, residues 63-73 are cytoplasmic; sequence TGFKWKKTVTT. A helical transmembrane segment spans residues 74-94; sequence LWFLNLAIADFIFLLFLPLYI. The Extracellular portion of the chain corresponds to 95–112; sequence SYVAMNFHWPFGIWLCKA. A disulfide bridge connects residues Cys-110 and Cys-187. Residues 113-133 traverse the membrane as a helical segment; that stretch reads NSFTAQLNMFASVFFLTVISL. The Cytoplasmic portion of the chain corresponds to 134–154; the sequence is DHYIHLIHPVLSHRHRTLKNS. Residues 155-175 form a helical membrane-spanning segment; the sequence is LIVIIFIWLLASLIGGPALYF. Residues 176–210 lie on the Extracellular side of the membrane; it reads RDTVEFNNHTLCYNNFQKHDPDLTLIRHHVLTWVK. Residues 211-231 traverse the membrane as a helical segment; sequence FIIGYLFPLLTMSICYLCLIF. The Cytoplasmic portion of the chain corresponds to 232-247; sequence KVKKRSILISSRHFWT. Residues 248-268 traverse the membrane as a helical segment; it reads ILVVVVAFVVCWTPYHLFSIW. The Extracellular portion of the chain corresponds to 269-286; the sequence is ELTIHHNSYSHHVMQAGI. Residues 287 to 307 traverse the membrane as a helical segment; that stretch reads PLSTGLAFLNSCLNPILYVLI. Topologically, residues 308 to 355 are cytoplasmic; sequence SKKFQARFRSSVAEILKYTLWEVSCSGTVSEQLRNSETKNLCLLETAQ.

Belongs to the chemokine-like receptor (CMKLR) family. Expressed in hippocampus.

Its subcellular location is the cell membrane. In terms of biological role, receptor for chemoattractant adipokine chemerin/RARRES2 suggesting a role for this receptor in the regulation of inflammation and energy homesotasis. Signals mainly via beta-arrestin pathway. Binding of RARRES2 activates weakly G proteins, calcium mobilization and MAPK1/MAPK3 (ERK1/2) phosphorylation too. Also acts as a receptor for TAFA1, mediates its effects on neuronal stem-cell proliferation and differentiation via the activation of ROCK/ERK and ROCK/STAT3 signaling pathway. Functionally, (Microbial infection) Coreceptor for HIV-1. The chain is Chemerin-like receptor 2 from Homo sapiens (Human).